The following is a 281-amino-acid chain: Pantothenate synthetase (281 aa).

30–37 (MGNLHLGH) contacts ATP. The active-site Proton donor is the His37. A (R)-pantoate-binding site is contributed by Gln61. Gln61 is a binding site for beta-alanine. Residue 149-152 (GRKD) coordinates ATP. Gln155 contacts (R)-pantoate. ATP-binding positions include Ile178 and 186-189 (MSSR).

Belongs to the pantothenate synthetase family. In terms of assembly, homodimer.

The protein resides in the cytoplasm. The enzyme catalyses (R)-pantoate + beta-alanine + ATP = (R)-pantothenate + AMP + diphosphate + H(+). It participates in cofactor biosynthesis; (R)-pantothenate biosynthesis; (R)-pantothenate from (R)-pantoate and beta-alanine: step 1/1. Its function is as follows. Catalyzes the condensation of pantoate with beta-alanine in an ATP-dependent reaction via a pantoyl-adenylate intermediate. This Shewanella woodyi (strain ATCC 51908 / MS32) protein is Pantothenate synthetase.